We begin with the raw amino-acid sequence, 463 residues long: Argininosuccinate lyase (463 aa).

The protein belongs to the lyase 1 family. Argininosuccinate lyase subfamily.

The protein resides in the cytoplasm. It catalyses the reaction 2-(N(omega)-L-arginino)succinate = fumarate + L-arginine. The protein operates within amino-acid biosynthesis; L-arginine biosynthesis; L-arginine from L-ornithine and carbamoyl phosphate: step 3/3. The sequence is that of Argininosuccinate lyase from Prochlorococcus marinus (strain NATL2A).